Here is a 198-residue protein sequence, read N- to C-terminus: Small ribosomal subunit protein eS1 (198 aa).

This sequence belongs to the eukaryotic ribosomal protein eS1 family.

This Methanospirillum hungatei JF-1 (strain ATCC 27890 / DSM 864 / NBRC 100397 / JF-1) protein is Small ribosomal subunit protein eS1.